We begin with the raw amino-acid sequence, 493 residues long: Glutamyl-tRNA(Gln) amidotransferase subunit A (493 aa).

Residues lysine 78 and serine 158 each act as charge relay system in the active site. Serine 182 acts as the Acyl-ester intermediate in catalysis.

The protein belongs to the amidase family. GatA subfamily. Heterotrimer of A, B and C subunits.

The catalysed reaction is L-glutamyl-tRNA(Gln) + L-glutamine + ATP + H2O = L-glutaminyl-tRNA(Gln) + L-glutamate + ADP + phosphate + H(+). Allows the formation of correctly charged Gln-tRNA(Gln) through the transamidation of misacylated Glu-tRNA(Gln) in organisms which lack glutaminyl-tRNA synthetase. The reaction takes place in the presence of glutamine and ATP through an activated gamma-phospho-Glu-tRNA(Gln). The protein is Glutamyl-tRNA(Gln) amidotransferase subunit A of Beijerinckia indica subsp. indica (strain ATCC 9039 / DSM 1715 / NCIMB 8712).